Here is a 391-residue protein sequence, read N- to C-terminus: Recombination and repair protein (391 aa).

60 to 67 lines the ATP pocket; that stretch reads GPSKSFKS. Residues 364–374 are compositionally biased toward basic and acidic residues; it reads KSPESKSKSAA. The disordered stretch occupies residues 364–391; that stretch reads KSPESKSKSAADLETDLEQLSDMEEFNE. Over residues 376–391 the composition is skewed to acidic residues; sequence LETDLEQLSDMEEFNE.

Belongs to the RecA family.

Important in genetic recombination, DNA repair, and replication. Possesses pairing and strand-transfer activity. Interacts with dda and gene 32 proteins. In Enterobacteria phage T4 (Bacteriophage T4), this protein is Recombination and repair protein (UVSX).